The chain runs to 333 residues: Anthranilate phosphoribosyltransferase (333 aa).

5-phospho-alpha-D-ribose 1-diphosphate is bound by residues glycine 78, 81–82 (GD), threonine 86, 88–91 (NVST), 106–114 (KHGNYSVSS), and serine 118. Anthranilate is bound at residue glycine 78. Serine 90 contacts Mg(2+). Asparagine 109 contributes to the anthranilate binding site. Residue arginine 164 coordinates anthranilate. The Mg(2+) site is built by aspartate 222 and glutamate 223.

It belongs to the anthranilate phosphoribosyltransferase family. As to quaternary structure, homodimer. Mg(2+) is required as a cofactor.

It carries out the reaction N-(5-phospho-beta-D-ribosyl)anthranilate + diphosphate = 5-phospho-alpha-D-ribose 1-diphosphate + anthranilate. It functions in the pathway amino-acid biosynthesis; L-tryptophan biosynthesis; L-tryptophan from chorismate: step 2/5. In terms of biological role, catalyzes the transfer of the phosphoribosyl group of 5-phosphorylribose-1-pyrophosphate (PRPP) to anthranilate to yield N-(5'-phosphoribosyl)-anthranilate (PRA). This is Anthranilate phosphoribosyltransferase from Natronomonas pharaonis (strain ATCC 35678 / DSM 2160 / CIP 103997 / JCM 8858 / NBRC 14720 / NCIMB 2260 / Gabara) (Halobacterium pharaonis).